The sequence spans 718 residues: Exostosin-2 (718 aa).

Topologically, residues 1 to 25 are cytoplasmic; it reads MCASVKYNIRGPALIPRMKTKHRIY. A helical; Signal-anchor for type II membrane protein transmembrane segment spans residues 26 to 46; the sequence is YITLFSIVLLGLIATGMFQFW. Residues 47-718 are Lumenal-facing; sequence PHSIESSGDW…LKSFPNIGSL (672 aa). Cystine bridges form between C85/C90, C96/C151, C286/C300, and C318/C339. An N-linked (GlcNAc...) asparagine glycan is attached at N288. The UDP site is built by L461, R465, N490, and N517. Positions 465, 490, 517, 522, 538, 539, and 540 each coordinate UDP-N-acetyl-alpha-D-glucosamine. UDP is bound by residues D538 and D539. D540 lines the Mn(2+) pocket. Y582 and S584 together coordinate a protein. C626 and C676 form a disulfide bridge. 2 residues coordinate UDP-N-acetyl-alpha-D-glucosamine: E627 and D628. N637 carries an N-linked (GlcNAc...) asparagine glycan. A protein contacts are provided by K651 and K653. R673 lines the UDP-N-acetyl-alpha-D-glucosamine pocket.

It belongs to the glycosyltransferase 47 family. Part of the heparan sulfate polymerase, a dimeric complex composed of EXT1 and EXT2. Could also form homooligomeric complexes. Interacts with NDST1. Interacts with GALNT5. Mn(2+) is required as a cofactor. In terms of processing, a soluble form is generated by proteolytic processing. N-glycosylated at Asn-637.

It is found in the golgi apparatus membrane. The protein resides in the golgi apparatus. The protein localises to the cis-Golgi network membrane. Its subcellular location is the endoplasmic reticulum membrane. It localises to the secreted. It carries out the reaction 3-O-{[(1-&gt;4)-beta-D-GlcA-(1-&gt;4)-alpha-D-GlcNAc](n)-(1-&gt;4)-beta-D-GlcA-(1-&gt;3)-beta-D-Gal-(1-&gt;3)-beta-D-Gal-(1-&gt;4)-beta-D-Xyl}-L-seryl-[protein] + UDP-N-acetyl-alpha-D-glucosamine = 3-O-{alpha-D-GlcNAc-[(1-&gt;4)-beta-D-GlcA-(1-&gt;4)-alpha-D-GlcNAc](n)-(1-&gt;4)-beta-D-GlcA-(1-&gt;3)-beta-D-Gal-(1-&gt;3)-beta-D-Gal-(1-&gt;4)-beta-D-Xyl}-L-seryl-[protein] + UDP + H(+). It functions in the pathway protein modification; protein glycosylation. In terms of biological role, glycosyltransferase forming with EXT1 the heterodimeric heparan sulfate polymerase which catalyzes the elongation of the heparan sulfate glycan backbone. Glycan backbone extension consists in the alternating transfer of (1-&gt;4)-beta-D-GlcA and (1-&gt;4)-alpha-D-GlcNAc residues from their respective UDP-sugar donors. Both EXT1 and EXT2 are required for the full activity of the polymerase since EXT1 bears the N-acetylglucosaminyl-proteoglycan 4-beta-glucuronosyltransferase activity within the complex while EXT2 carries the glucuronosyl-N-acetylglucosaminyl-proteoglycan 4-alpha-N-acetylglucosaminyltransferase activity. Heparan sulfate proteoglycans are ubiquitous components of the extracellular matrix and play an important role in tissue homeostasis and signaling. The sequence is that of Exostosin-2 from Bos taurus (Bovine).